The following is a 373-amino-acid chain: Putative F-box/kelch-repeat protein At2g41360 (373 aa).

Positions 8-54 (WSSLSCLPDEMVLNCLARVPRRYYENISCVSVRLRSLVRTPELYRMR) constitute an F-box domain. Kelch repeat units lie at residues 116 to 162 (EIYF…VFDG) and 163 to 208 (KIHV…MVSS).

This is Putative F-box/kelch-repeat protein At2g41360 from Arabidopsis thaliana (Mouse-ear cress).